Consider the following 326-residue polypeptide: tRNA uridine(34) hydroxylase (326 aa).

The region spanning 123–217 (SDPDVLLVDT…YLEEVKQEES (95 aa)) is the Rhodanese domain. Cysteine 177 (cysteine persulfide intermediate) is an active-site residue. The disordered stretch occupies residues 304–326 (VSQVILSRRTEKEDQRQAQNKKA).

It belongs to the TrhO family.

The enzyme catalyses uridine(34) in tRNA + AH2 + O2 = 5-hydroxyuridine(34) in tRNA + A + H2O. Functionally, catalyzes oxygen-dependent 5-hydroxyuridine (ho5U) modification at position 34 in tRNAs. This is tRNA uridine(34) hydroxylase from Shewanella sediminis (strain HAW-EB3).